A 605-amino-acid polypeptide reads, in one-letter code: Alanine--tRNA ligase (605 aa).

Residues His463, His467, Cys565, and His569 each contribute to the Zn(2+) site.

It belongs to the class-II aminoacyl-tRNA synthetase family. Zn(2+) serves as cofactor.

It is found in the cytoplasm. The enzyme catalyses tRNA(Ala) + L-alanine + ATP = L-alanyl-tRNA(Ala) + AMP + diphosphate. Catalyzes the attachment of alanine to tRNA(Ala) in a two-step reaction: alanine is first activated by ATP to form Ala-AMP and then transferred to the acceptor end of tRNA(Ala). Also edits incorrectly charged Ser-tRNA(Ala) and Gly-tRNA(Ala) via its editing domain. The polypeptide is Alanine--tRNA ligase (alaS) (Treponema pallidum (strain Nichols)).